Consider the following 228-residue polypeptide: Deoxyribose-phosphate aldolase (228 aa).

Catalysis depends on Asp96, which acts as the Proton donor/acceptor. Lys157 serves as the catalytic Schiff-base intermediate with acetaldehyde. The active-site Proton donor/acceptor is the Lys185.

It belongs to the DeoC/FbaB aldolase family. DeoC type 1 subfamily.

It localises to the cytoplasm. It carries out the reaction 2-deoxy-D-ribose 5-phosphate = D-glyceraldehyde 3-phosphate + acetaldehyde. The protein operates within carbohydrate degradation; 2-deoxy-D-ribose 1-phosphate degradation; D-glyceraldehyde 3-phosphate and acetaldehyde from 2-deoxy-alpha-D-ribose 1-phosphate: step 2/2. Catalyzes a reversible aldol reaction between acetaldehyde and D-glyceraldehyde 3-phosphate to generate 2-deoxy-D-ribose 5-phosphate. This chain is Deoxyribose-phosphate aldolase, found in Picosynechococcus sp. (strain ATCC 27264 / PCC 7002 / PR-6) (Agmenellum quadruplicatum).